Here is a 198-residue protein sequence, read N- to C-terminus: Anthranilate synthase component 2 (198 aa).

The region spanning 2 to 198 (LLMMIDNYDS…NFLKQTGGRR (197 aa)) is the Glutamine amidotransferase type-1 domain. Residue 53-55 (GPC) coordinates L-glutamine. Catalysis depends on Cys80, which acts as the Nucleophile; for GATase activity. L-glutamine is bound by residues Gln84 and 130-131 (SL). Active-site for GATase activity residues include His174 and Glu176.

Heterotetramer consisting of two non-identical subunits: a beta subunit (TrpG) and a large alpha subunit (TrpE).

The catalysed reaction is chorismate + L-glutamine = anthranilate + pyruvate + L-glutamate + H(+). It participates in amino-acid biosynthesis; L-tryptophan biosynthesis; L-tryptophan from chorismate: step 1/5. Its function is as follows. Part of a heterotetrameric complex that catalyzes the two-step biosynthesis of anthranilate, an intermediate in the biosynthesis of L-tryptophan. In the first step, the glutamine-binding beta subunit (TrpG) of anthranilate synthase (AS) provides the glutamine amidotransferase activity which generates ammonia as a substrate that, along with chorismate, is used in the second step, catalyzed by the large alpha subunit of AS (TrpE) to produce anthranilate. In the absence of TrpG, TrpE can synthesize anthranilate directly from chorismate and high concentrations of ammonia. This is Anthranilate synthase component 2 (trpG) from Pseudomonas putida (Arthrobacter siderocapsulatus).